The chain runs to 684 residues: Probable phosphoenolpyruvate synthase (684 aa).

His424 serves as the catalytic Tele-phosphohistidine intermediate. Positions 517, 564, and 661 each coordinate substrate. Residue Glu661 participates in Mg(2+) binding.

The protein belongs to the PEP-utilizing enzyme family. The cofactor is Mg(2+).

The catalysed reaction is pyruvate + ATP + H2O = phosphoenolpyruvate + AMP + phosphate + 2 H(+). It participates in carbohydrate biosynthesis; gluconeogenesis. Its function is as follows. Catalyzes the phosphorylation of pyruvate to phosphoenolpyruvate. This is Probable phosphoenolpyruvate synthase (ppsA) from Methanothermobacter thermautotrophicus (strain ATCC 29096 / DSM 1053 / JCM 10044 / NBRC 100330 / Delta H) (Methanobacterium thermoautotrophicum).